The following is a 260-amino-acid chain: MYQPQPFVTRLAFKCSDRPEAQEARERLAARYGDVGPENAQVIVALGGDGFMLESLHEAIASQTPIYGMNRGSVGFLMNEYSEDGLLERINAAERAVIHPLAMVAIDARRTQHRALAINEVSLLRQTRQTAKLRISIDGKVRMGELVCDGALLATPAGSTAYNLSAHGPIIPIDGRVLALTPISAFRPRRWRGALLPQSARVTFEILEADKRPVSAVADNFEVRDAMEVHISEDRGTSLAMLFDAGRSLEERVLAEQFSA.

Aspartate 49 (proton acceptor) is an active-site residue. NAD(+) contacts are provided by residues 49-50 (DG), 119-120 (NE), aspartate 149, alanine 157, and 160-165 (TAYNLS).

It belongs to the NAD kinase family. The cofactor is a divalent metal cation.

The protein resides in the cytoplasm. It catalyses the reaction NAD(+) + ATP = ADP + NADP(+) + H(+). Its function is as follows. Involved in the regulation of the intracellular balance of NAD and NADP, and is a key enzyme in the biosynthesis of NADP. Catalyzes specifically the phosphorylation on 2'-hydroxyl of the adenosine moiety of NAD to yield NADP. The chain is NAD kinase from Caulobacter vibrioides (strain ATCC 19089 / CIP 103742 / CB 15) (Caulobacter crescentus).